Reading from the N-terminus, the 372-residue chain is Mitogen-activated protein kinase homolog NTF3 (372 aa).

The 288-residue stretch at 32–319 (YVPIKPIGRG…VIEALQHPYM (288 aa)) folds into the Protein kinase domain. Residues 38 to 46 (IGRGAYGIV) and Lys61 each bind ATP. Asp158 serves as the catalytic Proton acceptor. At Thr191 the chain carries Phosphothreonine. Positions 191–193 (TEY) match the TXY motif. Tyr193 is subject to Phosphotyrosine.

It belongs to the protein kinase superfamily. CMGC Ser/Thr protein kinase family. MAP kinase subfamily. Requires Mg(2+) as cofactor. In terms of processing, dually phosphorylated on Thr-191 and Tyr-193, which activates the enzyme. Very low autophosphorylation, although dramatically increased when Mn(2+) is added to the reaction instead of Mg(2+). Ubiquitous.

The catalysed reaction is L-seryl-[protein] + ATP = O-phospho-L-seryl-[protein] + ADP + H(+). It carries out the reaction L-threonyl-[protein] + ATP = O-phospho-L-threonyl-[protein] + ADP + H(+). Its activity is regulated as follows. Activated by tyrosine and threonine phosphorylation. The chain is Mitogen-activated protein kinase homolog NTF3 (NTF3) from Nicotiana tabacum (Common tobacco).